We begin with the raw amino-acid sequence, 231 residues long: Large ribosomal subunit protein uL1 (231 aa).

The protein belongs to the universal ribosomal protein uL1 family. As to quaternary structure, part of the 50S ribosomal subunit.

In terms of biological role, binds directly to 23S rRNA. The L1 stalk is quite mobile in the ribosome, and is involved in E site tRNA release. Its function is as follows. Protein L1 is also a translational repressor protein, it controls the translation of the L11 operon by binding to its mRNA. This is Large ribosomal subunit protein uL1 from Allorhizobium ampelinum (strain ATCC BAA-846 / DSM 112012 / S4) (Agrobacterium vitis (strain S4)).